We begin with the raw amino-acid sequence, 349 residues long: Interferon regulatory factor 2 (349 aa).

Positions 5–113 form a DNA-binding region, IRF tryptophan pentad repeat; sequence RMRMRPWLEE…NAFRVYRMLP (109 aa). K75 and K78 each carry N6-acetyllysine. The segment at 117 to 148 is disordered; the sequence is RPSKKGKKPKTEKEDKVKHIKQEPVESSLGLS. A compositionally biased stretch (basic and acidic residues) spans 125–140; it reads PKTEKEDKVKHIKQEP. K137 participates in a covalent cross-link: Glycyl lysine isopeptide (Lys-Gly) (interchain with G-Cter in SUMO); alternate. K137 is covalently cross-linked (Glycyl lysine isopeptide (Lys-Gly) (interchain with G-Cter in SUMO2); alternate). Residue K166 forms a Glycyl lysine isopeptide (Lys-Gly) (interchain with G-Cter in SUMO) linkage. S225 is modified (phosphoserine). The segment covering 228–239 has biased composition (polar residues); it reads SSYAESETTDSV. The segment at 228-251 is disordered; it reads SSYAESETTDSVPSDEESAEGRPH. Residue K260 forms a Glycyl lysine isopeptide (Lys-Gly) (interchain with G-Cter in SUMO2) linkage. Residue K293 forms a Glycyl lysine isopeptide (Lys-Gly) (interchain with G-Cter in SUMO) linkage. The tract at residues 297–349 is disordered; it reads NPVPYNSSWPPFQDLPLSSSMTPASSSSRPDRETRASVIKKTSDITQARVKSC. Low complexity predominate over residues 314 to 324; that stretch reads SSSMTPASSSS.

Belongs to the IRF family. As to quaternary structure, interacts with BRD7, IRF2BP1 and IRF2BP2. Interacts with CREBBP in growing cells; the interaction acetylates IRF2 and regulates IRF2-dependent H4 promoter activity. Post-translationally, acetylated by CBP/ p300 during cell-growth. Acetylation on Lys-75 is required for stimulation of H4 promoter activity. The major sites of sumoylation are Lys-137 and Lys-293. Sumoylation with SUMO1 increases its transcriptional repressor activity on IRF1 and diminishes its ability to activate ISRE and H4 promoter. In terms of tissue distribution, expressed throughout the epithelium of the colon. Also expressed in lamina propria.

The protein resides in the nucleus. Its function is as follows. Specifically binds to the upstream regulatory region of type I IFN and IFN-inducible MHC class I genes (the interferon consensus sequence (ICS)) and represses those genes. Also acts as an activator for several genes including H4 and IL7. Constitutively binds to the ISRE promoter to activate IL7. Involved in cell cycle regulation through binding the site II (HiNF-M) promoter region of H4 and activating transcription during cell growth. Antagonizes IRF1 transcriptional activation. The polypeptide is Interferon regulatory factor 2 (IRF2) (Homo sapiens (Human)).